The chain runs to 69 residues: DNA-directed RNA polymerase subunit epsilon (69 aa).

Belongs to the RNA polymerase subunit epsilon family. In terms of assembly, RNAP is composed of a core of 2 alpha, a beta and a beta' subunit. The core is associated with a delta subunit, and at least one of epsilon or omega. When a sigma factor is associated with the core the holoenzyme is formed, which can initiate transcription.

The enzyme catalyses RNA(n) + a ribonucleoside 5'-triphosphate = RNA(n+1) + diphosphate. In terms of biological role, a non-essential component of RNA polymerase (RNAP). In Bacillus pumilus (strain SAFR-032), this protein is DNA-directed RNA polymerase subunit epsilon.